Consider the following 256-residue polypeptide: Phosphonates import ATP-binding protein PhnC (256 aa).

The 245-residue stretch at 2–246 (LKVIQLDKTY…VLQHIYRQPD (245 aa)) folds into the ABC transporter domain. 35 to 42 (GPSGAGKT) serves as a coordination point for ATP.

The protein belongs to the ABC transporter superfamily. Phosphonates importer (TC 3.A.1.9.1) family. The complex is composed of two ATP-binding proteins (PhnC), two transmembrane proteins (PhnE) and a solute-binding protein (PhnD).

It is found in the cell membrane. The catalysed reaction is phosphonate(out) + ATP + H2O = phosphonate(in) + ADP + phosphate + H(+). Functionally, part of the ABC transporter complex PhnCDE involved in phosphonates import. Responsible for energy coupling to the transport system. This chain is Phosphonates import ATP-binding protein PhnC, found in Lactiplantibacillus plantarum (strain ATCC BAA-793 / NCIMB 8826 / WCFS1) (Lactobacillus plantarum).